We begin with the raw amino-acid sequence, 152 residues long: Protein FERTILITY RESTORER RF2, mitochondrial (152 aa).

The transit peptide at Met1–Cys52 directs the protein to the mitochondrion. Polar residues predominate over residues Cys52–Val69. The interval Cys52–Gly99 is disordered.

The protein resides in the mitochondrion. Restores fertility in rice varieties with LD-type cytoplasmic male sterility (CMS). CMS is caused by genetic incompatibility between nuclei and mitochondria within male reproductive organs. Corresponds to the functional allele of RF2, which is dependent of the presence of Ile-78 in the japonica cultivars Fukuyama and Owarihatamochi (AC F1SZ42), and indica cultivar Kasalath (AC F1SZ41). Non-functional RF2 alleles are found in japonica cultivars Taichung 65 and Nipponbare (AC F1SZ44), where Ile-78 is replaced by Thr-78. The protein is Protein FERTILITY RESTORER RF2, mitochondrial of Oryza sativa subsp. japonica (Rice).